The following is an 88-amino-acid chain: Large ribosomal subunit protein bL27 (88 aa).

The tract at residues 1-24 is disordered; that stretch reads MAHKKGTGSTRNGRDSNSKRLGVK.

The protein belongs to the bacterial ribosomal protein bL27 family.

The protein is Large ribosomal subunit protein bL27 of Prochlorococcus marinus (strain MIT 9303).